Here is a 428-residue protein sequence, read N- to C-terminus: Trigger factor (428 aa).

The region spanning 163–248 is the PPIase FKBP-type domain; that stretch reads GDTVVIDFEG…LHEIKTKQLP (86 aa).

It belongs to the FKBP-type PPIase family. Tig subfamily.

Its subcellular location is the cytoplasm. It catalyses the reaction [protein]-peptidylproline (omega=180) = [protein]-peptidylproline (omega=0). Involved in protein export. Acts as a chaperone by maintaining the newly synthesized protein in an open conformation. Functions as a peptidyl-prolyl cis-trans isomerase. The polypeptide is Trigger factor (Anoxybacillus flavithermus (strain DSM 21510 / WK1)).